The primary structure comprises 788 residues: Putative wall-associated receptor kinase-like 11 (788 aa).

The first 27 residues, Met1–Ser27, serve as a signal peptide directing secretion. Residues Leu28–Arg375 lie on the Extracellular side of the membrane. Asn65, Asn80, Asn121, Asn159, Asn233, Asn253, Asn278, Asn295, and Asn310 each carry an N-linked (GlcNAc...) asparagine glycan. The interval Cys306 to Cys369 is atypical EGF-like. 3 disulfide bridges follow: Cys308–Cys321, Cys343–Cys360, and Cys354–Cys369. N-linked (GlcNAc...) asparagine glycosylation occurs at Asn372. A helical transmembrane segment spans residues Val376 to Trp396. Residues Leu397–Ile788 are Cytoplasmic-facing. Positions Phe451 to Leu726 constitute a Protein kinase domain. Residues Leu457–Val465 and Lys479 contribute to the ATP site. At Tyr524 the chain carries Phosphotyrosine. The Proton acceptor role is filled by Asp576. Thr610 and Thr615 each carry phosphothreonine. Tyr623 carries the phosphotyrosine modification.

This sequence belongs to the protein kinase superfamily. Ser/Thr protein kinase family.

It localises to the membrane. The enzyme catalyses L-seryl-[protein] + ATP = O-phospho-L-seryl-[protein] + ADP + H(+). It carries out the reaction L-threonyl-[protein] + ATP = O-phospho-L-threonyl-[protein] + ADP + H(+). Putative serine/threonine-protein kinase that may function as a signaling receptor of extracellular matrix component. The protein is Putative wall-associated receptor kinase-like 11 (WAKL11) of Arabidopsis thaliana (Mouse-ear cress).